Reading from the N-terminus, the 464-residue chain is Asparagine--tRNA ligase (464 aa).

The protein belongs to the class-II aminoacyl-tRNA synthetase family. As to quaternary structure, homodimer.

Its subcellular location is the cytoplasm. It carries out the reaction tRNA(Asn) + L-asparagine + ATP = L-asparaginyl-tRNA(Asn) + AMP + diphosphate + H(+). The polypeptide is Asparagine--tRNA ligase (Clostridium botulinum (strain Eklund 17B / Type B)).